Reading from the N-terminus, the 504-residue chain is 2,3-bisphosphoglycerate-independent phosphoglycerate mutase (504 aa).

Mn(2+) is bound by residues Asp-11 and Ser-61. Residue Ser-61 is the Phosphoserine intermediate of the active site. Substrate-binding positions include His-122, 152–153 (RD), Arg-183, Arg-189, 255–258 (RNDR), and Lys-329. Residues Asp-396, His-400, Asp-437, His-438, and His-455 each contribute to the Mn(2+) site.

Belongs to the BPG-independent phosphoglycerate mutase family. In terms of assembly, monomer. It depends on Mn(2+) as a cofactor.

The enzyme catalyses (2R)-2-phosphoglycerate = (2R)-3-phosphoglycerate. It participates in carbohydrate degradation; glycolysis; pyruvate from D-glyceraldehyde 3-phosphate: step 3/5. In terms of biological role, catalyzes the interconversion of 2-phosphoglycerate and 3-phosphoglycerate. In Bacteroides fragilis (strain ATCC 25285 / DSM 2151 / CCUG 4856 / JCM 11019 / LMG 10263 / NCTC 9343 / Onslow / VPI 2553 / EN-2), this protein is 2,3-bisphosphoglycerate-independent phosphoglycerate mutase.